We begin with the raw amino-acid sequence, 252 residues long: 2-succinyl-6-hydroxy-2,4-cyclohexadiene-1-carboxylate synthase (252 aa).

The protein belongs to the AB hydrolase superfamily. MenH family. As to quaternary structure, monomer.

It catalyses the reaction 5-enolpyruvoyl-6-hydroxy-2-succinyl-cyclohex-3-ene-1-carboxylate = (1R,6R)-6-hydroxy-2-succinyl-cyclohexa-2,4-diene-1-carboxylate + pyruvate. Its pathway is quinol/quinone metabolism; 1,4-dihydroxy-2-naphthoate biosynthesis; 1,4-dihydroxy-2-naphthoate from chorismate: step 3/7. It functions in the pathway quinol/quinone metabolism; menaquinone biosynthesis. In terms of biological role, catalyzes a proton abstraction reaction that results in 2,5-elimination of pyruvate from 2-succinyl-5-enolpyruvyl-6-hydroxy-3-cyclohexene-1-carboxylate (SEPHCHC) and the formation of 2-succinyl-6-hydroxy-2,4-cyclohexadiene-1-carboxylate (SHCHC). This Escherichia fergusonii (strain ATCC 35469 / DSM 13698 / CCUG 18766 / IAM 14443 / JCM 21226 / LMG 7866 / NBRC 102419 / NCTC 12128 / CDC 0568-73) protein is 2-succinyl-6-hydroxy-2,4-cyclohexadiene-1-carboxylate synthase.